The following is a 339-amino-acid chain: Deoxyguanosinetriphosphate triphosphohydrolase-like protein (339 aa).

The HD domain maps to 75–186 (RLTHTLEVAQ…VQISDKIAYI (112 aa)).

It belongs to the dGTPase family. Type 2 subfamily.

The protein is Deoxyguanosinetriphosphate triphosphohydrolase-like protein of Caldanaerobacter subterraneus subsp. tengcongensis (strain DSM 15242 / JCM 11007 / NBRC 100824 / MB4) (Thermoanaerobacter tengcongensis).